The chain runs to 390 residues: Succinyl-diaminopimelate desuccinylase (390 aa).

Residue His74 coordinates Zn(2+). Asp76 is a catalytic residue. Asp107 provides a ligand contact to Zn(2+). The active-site Proton acceptor is the Glu140. Zn(2+)-binding residues include Glu141, Glu169, and His363.

Belongs to the peptidase M20A family. DapE subfamily. Homodimer. It depends on Zn(2+) as a cofactor. Co(2+) serves as cofactor.

It carries out the reaction N-succinyl-(2S,6S)-2,6-diaminopimelate + H2O = (2S,6S)-2,6-diaminopimelate + succinate. Its pathway is amino-acid biosynthesis; L-lysine biosynthesis via DAP pathway; LL-2,6-diaminopimelate from (S)-tetrahydrodipicolinate (succinylase route): step 3/3. Catalyzes the hydrolysis of N-succinyl-L,L-diaminopimelic acid (SDAP), forming succinate and LL-2,6-diaminopimelate (DAP), an intermediate involved in the bacterial biosynthesis of lysine and meso-diaminopimelic acid, an essential component of bacterial cell walls. The protein is Succinyl-diaminopimelate desuccinylase of Bartonella henselae (strain ATCC 49882 / DSM 28221 / CCUG 30454 / Houston 1) (Rochalimaea henselae).